We begin with the raw amino-acid sequence, 176 residues long: Inorganic pyrophosphatase (176 aa).

Positions 31, 45, and 57 each coordinate substrate. 3 residues coordinate Mg(2+): D67, D72, and D104. Y142 is a substrate binding site.

Belongs to the PPase family. In terms of assembly, homohexamer. Mg(2+) is required as a cofactor.

It is found in the cytoplasm. It carries out the reaction diphosphate + H2O = 2 phosphate + H(+). Functionally, catalyzes the hydrolysis of inorganic pyrophosphate (PPi) forming two phosphate ions. The protein is Inorganic pyrophosphatase of Haemophilus influenzae (strain ATCC 51907 / DSM 11121 / KW20 / Rd).